The following is a 261-amino-acid chain: UPF0246 protein Vapar_1301 (261 aa).

It belongs to the UPF0246 family.

In Variovorax paradoxus (strain S110), this protein is UPF0246 protein Vapar_1301.